A 264-amino-acid chain; its full sequence is Phosphonoacetaldehyde hydrolase (264 aa).

The active-site Nucleophile is Asp10. Residues Asp10 and Ala12 each coordinate Mg(2+). Residue Lys52 is the Schiff-base intermediate with substrate of the active site. Mg(2+) is bound at residue Asp185.

The protein belongs to the HAD-like hydrolase superfamily. PhnX family. As to quaternary structure, homodimer. It depends on Mg(2+) as a cofactor.

The enzyme catalyses phosphonoacetaldehyde + H2O = acetaldehyde + phosphate + H(+). Involved in phosphonate degradation. The protein is Phosphonoacetaldehyde hydrolase of Parabacteroides distasonis (strain ATCC 8503 / DSM 20701 / CIP 104284 / JCM 5825 / NCTC 11152).